The primary structure comprises 302 residues: Zinc import ATP-binding protein ZnuC (302 aa).

The ABC transporter domain occupies 13 to 228 (VSLANAGVRR…PEYLKLFGRR (216 aa)). 45–52 (GPNGSGKS) is a binding site for ATP.

This sequence belongs to the ABC transporter superfamily. Zinc importer (TC 3.A.1.15.5) family. The complex is composed of two ATP-binding proteins (ZnuC), two transmembrane proteins (ZnuB) and a solute-binding protein (ZnuA).

Its subcellular location is the cell inner membrane. It carries out the reaction Zn(2+)(out) + ATP(in) + H2O(in) = Zn(2+)(in) + ADP(in) + phosphate(in) + H(+)(in). In terms of biological role, part of the ABC transporter complex ZnuABC involved in zinc import. Responsible for energy coupling to the transport system. The polypeptide is Zinc import ATP-binding protein ZnuC (Rhizobium meliloti (strain 1021) (Ensifer meliloti)).